Here is a 156-residue protein sequence, read N- to C-terminus: Small ribosomal subunit protein uS7 (156 aa).

Belongs to the universal ribosomal protein uS7 family. As to quaternary structure, part of the 30S ribosomal subunit. Contacts proteins S9 and S11.

Its function is as follows. One of the primary rRNA binding proteins, it binds directly to 16S rRNA where it nucleates assembly of the head domain of the 30S subunit. Is located at the subunit interface close to the decoding center, probably blocks exit of the E-site tRNA. The chain is Small ribosomal subunit protein uS7 from Photorhabdus laumondii subsp. laumondii (strain DSM 15139 / CIP 105565 / TT01) (Photorhabdus luminescens subsp. laumondii).